Reading from the N-terminus, the 259-residue chain is Ribonuclease HII (259 aa).

The RNase H type-2 domain occupies 72–259; sequence ERIAGIDEAG…PVREALGVQS (188 aa). 3 residues coordinate a divalent metal cation: Asp78, Glu79, and Asp170.

It belongs to the RNase HII family. Requires Mn(2+) as cofactor. It depends on Mg(2+) as a cofactor.

The protein localises to the cytoplasm. It catalyses the reaction Endonucleolytic cleavage to 5'-phosphomonoester.. Endonuclease that specifically degrades the RNA of RNA-DNA hybrids. This Geobacillus thermodenitrificans (strain NG80-2) protein is Ribonuclease HII.